Here is a 224-residue protein sequence, read N- to C-terminus: Ribonuclease 3 (224 aa).

Positions 4–127 constitute an RNase III domain; it reads IEKLEQSLTY…IIGAIHLEAG (124 aa). Residue glutamate 40 participates in Mg(2+) binding. Aspartate 44 is an active-site residue. 2 residues coordinate Mg(2+): aspartate 113 and glutamate 116. The active site involves glutamate 116. The DRBM domain occupies 154–223; it reads DYKTKLQEIT…AKIALEKLGA (70 aa).

This sequence belongs to the ribonuclease III family. In terms of assembly, homodimer. Mg(2+) is required as a cofactor.

It localises to the cytoplasm. It catalyses the reaction Endonucleolytic cleavage to 5'-phosphomonoester.. Its function is as follows. Digests double-stranded RNA. Involved in the processing of primary rRNA transcript to yield the immediate precursors to the large and small rRNAs (23S and 16S). Also processes some mRNAs, and tRNAs when they are encoded in the rRNA operon. CRISPR (clustered regularly interspaced short palindromic repeat) is an adaptive immune system that provides protection against mobile genetic elements (viruses, transposable elements and conjugative plasmids). CRISPR clusters contain spacers, sequences complementary to antecedent mobile elements, and target invading nucleic acids. CRISPR clusters are transcribed and processed into CRISPR RNA (crRNA). In this organism endogenous ribonuclease 3 and Cas9 are required for correct coprocessing of pre-crRNA and the trans-encoded small RNA (tracrRNA). Cas9, crRNA and tracrRNA are required for cleavage of invading DNA. Complements pre-crRNA and tracrRNA coprocessing defects in an rnc deletion in S.pyogenes strain 370. This is Ribonuclease 3 from Campylobacter jejuni subsp. jejuni serotype O:2 (strain ATCC 700819 / NCTC 11168).